The following is a 246-amino-acid chain: Biosynthetic peptidoglycan transglycosylase (246 aa).

Residues 27-47 (VVFCFFFAVFALLLIFRFVPI) traverse the membrane as a helical segment.

It belongs to the glycosyltransferase 51 family.

It is found in the cell inner membrane. It catalyses the reaction [GlcNAc-(1-&gt;4)-Mur2Ac(oyl-L-Ala-gamma-D-Glu-L-Lys-D-Ala-D-Ala)](n)-di-trans,octa-cis-undecaprenyl diphosphate + beta-D-GlcNAc-(1-&gt;4)-Mur2Ac(oyl-L-Ala-gamma-D-Glu-L-Lys-D-Ala-D-Ala)-di-trans,octa-cis-undecaprenyl diphosphate = [GlcNAc-(1-&gt;4)-Mur2Ac(oyl-L-Ala-gamma-D-Glu-L-Lys-D-Ala-D-Ala)](n+1)-di-trans,octa-cis-undecaprenyl diphosphate + di-trans,octa-cis-undecaprenyl diphosphate + H(+). The protein operates within cell wall biogenesis; peptidoglycan biosynthesis. Functionally, peptidoglycan polymerase that catalyzes glycan chain elongation from lipid-linked precursors. The polypeptide is Biosynthetic peptidoglycan transglycosylase (Haemophilus influenzae (strain ATCC 51907 / DSM 11121 / KW20 / Rd)).